We begin with the raw amino-acid sequence, 247 residues long: uncharacterized protein (247 aa).

The protein to M.pneumoniae MPN_635 N-terminal region.

This is an uncharacterized protein from Mycoplasma pneumoniae (strain ATCC 29342 / M129 / Subtype 1) (Mycoplasmoides pneumoniae).